A 303-amino-acid polypeptide reads, in one-letter code: Secreted mono- and diacylglycerol lipase LIP4 (303 aa).

Positions 1–16 (MHFLAFLLCLIPLALC) are cleaved as a signal peptide. Cysteines 54 and 293 form a disulfide. The active-site Nucleophile is serine 167. Aspartate 224 is a catalytic residue.

This sequence belongs to the AB hydrolase superfamily. Lipase family. Class 3 subfamily.

The protein resides in the secreted. It catalyses the reaction a monoacylglycerol + H2O = glycerol + a fatty acid + H(+). It carries out the reaction a diacylglycerol + H2O = a monoacylglycerol + a fatty acid + H(+). In terms of biological role, secreted lipase involved in Dandruff and seborrheic dermatitis (D/SD) probably via lipase-mediated breakdown of sebaceous lipids and release of irritating free fatty acids. Shows activity against monoglyceride and diglyceride substrates. Due to an absence of fatty acid synthase genes in Malassezia species, secretory lipases are essential for the yeast to generate free fatty acids from degradation of sebum and assimilate them as lipid sources for growth. Plays an essential role at the pathogen-host interface during disease progression. In Malassezia restricta (strain ATCC 96810 / NBRC 103918 / CBS 7877) (Seborrheic dermatitis infection agent), this protein is Secreted mono- and diacylglycerol lipase LIP4.